We begin with the raw amino-acid sequence, 117 residues long: Hainantoxin-XV-4 (117 aa).

Positions 1–20 (MKLCAVIIASLLVCVAVASS) are cleaved as a signal peptide. Residues 20–55 (SSDNQKEFAQEKEMTREETQSLGEHEKDDEVTGSEE) are disordered. Positions 21-56 (SDNQKEFAQEKEMTREETQSLGEHEKDDEVTGSEER) are excised as a propeptide. Positions 23–55 (NQKEFAQEKEMTREETQSLGEHEKDDEVTGSEE) are enriched in basic and acidic residues. 4 disulfide bridges follow: Cys-58–Cys-72, Cys-65–Cys-78, Cys-69–Cys-115, and Cys-71–Cys-91.

The protein belongs to the neurotoxin 03 (Tx2) family. 02 subfamily. HNTX-XV sub-subfamily. As to expression, expressed by the venom gland.

Its subcellular location is the secreted. Putative ion channel inhibitor. This is Hainantoxin-XV-4 from Cyriopagopus hainanus (Chinese bird spider).